We begin with the raw amino-acid sequence, 90 residues long: UPF0213 protein lin0209 (90 aa).

One can recognise a GIY-YIG domain in the interval 5–80 (NEHFFYVLKC…KKLSRKNKDS (76 aa)).

Belongs to the UPF0213 family.

The protein is UPF0213 protein lin0209 of Listeria innocua serovar 6a (strain ATCC BAA-680 / CLIP 11262).